The primary structure comprises 360 residues: Alpha-2-macroglobulin receptor-associated protein (360 aa).

Residues M1 to P28 form the signal peptide. A phosphoserine mark is found at S53 and S138. Positions E184–E302 form a coiled coil. An LDL receptor binding region spans residues R240–R356. N-linked (GlcNAc...) asparagine glycosylation occurs at N271. Residues H357–L360 carry the Prevents secretion from ER motif.

It belongs to the alpha-2-MRAP family. Interacts with the LRP1/alpha-2-macroglobulin receptor heavy and light chains; the interaction is transient and coincides with a reduction of ligand binding by the receptor. Interacts with LRP2/glycoprotein 330. Interacts with LRP1B; binding is followed by internalization and degradation. Interacts with LDLR. Interacts with SORL1. Interacts with LRP1; this interaction is followed by rapid internalization. Post-translationally, N-glycosylated. In terms of tissue distribution, highly expressed in PYS-2 parietal endoderm cells and in the kidney. The RNA level increased about 10-fold during differentiation of F9 embryonal carcinoma cells to parietal endoderm cells.

Its subcellular location is the rough endoplasmic reticulum lumen. The protein localises to the endoplasmic reticulum-Golgi intermediate compartment lumen. The protein resides in the golgi apparatus. It is found in the cis-Golgi network. It localises to the golgi apparatus lumen. Its subcellular location is the endosome lumen. The protein localises to the cell surface. In terms of biological role, molecular chaperone for LDL receptor-related proteins that may regulate their ligand binding activity along the secretory pathway. The sequence is that of Alpha-2-macroglobulin receptor-associated protein (Lrpap1) from Mus musculus (Mouse).